The sequence spans 242 residues: Pyridoxine 5'-phosphate synthase (242 aa).

Asn-7 lines the 3-amino-2-oxopropyl phosphate pocket. 9–10 (DH) is a 1-deoxy-D-xylulose 5-phosphate binding site. 3-amino-2-oxopropyl phosphate is bound at residue Arg-18. His-44 (proton acceptor) is an active-site residue. Arg-46 and His-51 together coordinate 1-deoxy-D-xylulose 5-phosphate. Glu-71 serves as the catalytic Proton acceptor. Residue Thr-101 participates in 1-deoxy-D-xylulose 5-phosphate binding. Residue His-192 is the Proton donor of the active site. Residues Gly-193 and 214-215 (GH) contribute to the 3-amino-2-oxopropyl phosphate site.

The protein belongs to the PNP synthase family. As to quaternary structure, homooctamer; tetramer of dimers.

The protein localises to the cytoplasm. The enzyme catalyses 3-amino-2-oxopropyl phosphate + 1-deoxy-D-xylulose 5-phosphate = pyridoxine 5'-phosphate + phosphate + 2 H2O + H(+). Its pathway is cofactor biosynthesis; pyridoxine 5'-phosphate biosynthesis; pyridoxine 5'-phosphate from D-erythrose 4-phosphate: step 5/5. In terms of biological role, catalyzes the complicated ring closure reaction between the two acyclic compounds 1-deoxy-D-xylulose-5-phosphate (DXP) and 3-amino-2-oxopropyl phosphate (1-amino-acetone-3-phosphate or AAP) to form pyridoxine 5'-phosphate (PNP) and inorganic phosphate. The protein is Pyridoxine 5'-phosphate synthase of Synechocystis sp. (strain ATCC 27184 / PCC 6803 / Kazusa).